Here is a 440-residue protein sequence, read N- to C-terminus: GTPase Der (440 aa).

2 consecutive EngA-type G domains span residues 4–168 (PIVA…PENK) and 177–352 (IKVA…NQRA). GTP contacts are provided by residues 10–17 (GRPNVGKS), 57–61 (DTGGI), 120–123 (NKVD), 183–190 (GKPNVGKS), 230–234 (DTAGL), and 295–298 (NKWD). The 85-residue stretch at 353-437 (MRVPTGGLNE…PIRFIYREKS (85 aa)) folds into the KH-like domain.

The protein belongs to the TRAFAC class TrmE-Era-EngA-EngB-Septin-like GTPase superfamily. EngA (Der) GTPase family. As to quaternary structure, associates with the 50S ribosomal subunit.

In terms of biological role, GTPase that plays an essential role in the late steps of ribosome biogenesis. This chain is GTPase Der, found in Alkaliphilus metalliredigens (strain QYMF).